A 325-amino-acid chain; its full sequence is MSGPLVLAVPSKGRLQENAEAFFGRAGLNLSKPGGARDYRGTISGLDNVEIAYLSASDIASQLARGTVHLGVTGEDLVREEITDADKRVLLIDTLGFGGANVVVAVPQAWIDVRTMADLDDVASGFRAQHNRRMRVATKYINLTRGFFASHGIVDYRIVESAGATEGAPAVGTAELIVDITSTGSTLVANGLKVLDDGVILRSQANLVASRDADWSEGPRESARIILDHIHARARASKYREVRTRFKGCDAAMLTEAHNRFGVVAPFGGPTSSGMLTLHCPPAQIYSLGSFLRAHGAETVSVASLDYVLDRENPLFARLEAFLRS.

This sequence belongs to the ATP phosphoribosyltransferase family. Long subfamily. It depends on Mg(2+) as a cofactor.

It is found in the cytoplasm. The catalysed reaction is 1-(5-phospho-beta-D-ribosyl)-ATP + diphosphate = 5-phospho-alpha-D-ribose 1-diphosphate + ATP. It functions in the pathway amino-acid biosynthesis; L-histidine biosynthesis; L-histidine from 5-phospho-alpha-D-ribose 1-diphosphate: step 1/9. With respect to regulation, feedback inhibited by histidine. In terms of biological role, catalyzes the condensation of ATP and 5-phosphoribose 1-diphosphate to form N'-(5'-phosphoribosyl)-ATP (PR-ATP). Has a crucial role in the pathway because the rate of histidine biosynthesis seems to be controlled primarily by regulation of HisG enzymatic activity. The chain is ATP phosphoribosyltransferase from Bradyrhizobium sp. (strain ORS 278).